A 318-amino-acid polypeptide reads, in one-letter code: Ribosomal RNA small subunit methyltransferase H (318 aa).

S-adenosyl-L-methionine-binding positions include 33-35 (GGH), D53, F80, D101, and Q108.

Belongs to the methyltransferase superfamily. RsmH family.

It localises to the cytoplasm. It carries out the reaction cytidine(1402) in 16S rRNA + S-adenosyl-L-methionine = N(4)-methylcytidine(1402) in 16S rRNA + S-adenosyl-L-homocysteine + H(+). In terms of biological role, specifically methylates the N4 position of cytidine in position 1402 (C1402) of 16S rRNA. The sequence is that of Ribosomal RNA small subunit methyltransferase H from Symbiobacterium thermophilum (strain DSM 24528 / JCM 14929 / IAM 14863 / T).